Here is a 72-residue protein sequence, read N- to C-terminus: Putative membrane protein insertion efficiency factor (72 aa).

The protein belongs to the UPF0161 family.

Its subcellular location is the cell inner membrane. Its function is as follows. Could be involved in insertion of integral membrane proteins into the membrane. This is Putative membrane protein insertion efficiency factor from Trichodesmium erythraeum (strain IMS101).